The following is a 122-amino-acid chain: UPF0382 membrane protein SERP0230 (122 aa).

4 helical membrane-spanning segments follow: residues 3–23, 46–66, 69–89, and 98–118; these read VFIILGALNAMMAVGTGAFGA, MYHGLGLLVIGLISGTTSINV, AGWLLFFGIVFFSGSLYFLAL, and ITPIGGVLFIIGWLVLVIATL.

It belongs to the UPF0382 family.

Its subcellular location is the cell membrane. This Staphylococcus epidermidis (strain ATCC 35984 / DSM 28319 / BCRC 17069 / CCUG 31568 / BM 3577 / RP62A) protein is UPF0382 membrane protein SERP0230.